We begin with the raw amino-acid sequence, 84 residues long: Conotoxin Tx8.1 (84 aa).

The signal sequence occupies residues 1–19 (LKMGAMFVLLLLFTLASSH). Positions 20 to 44 (REGDIQARKTHLKSDFYRTLPRFAR) are excised as a propeptide.

It belongs to the conotoxin S superfamily. Contains 5 disulfide bonds. Expressed by the venom duct.

The protein resides in the secreted. The chain is Conotoxin Tx8.1 from Conus textile (Cloth-of-gold cone).